We begin with the raw amino-acid sequence, 541 residues long: Cytosolic phospholipase A2 gamma (541 aa).

In terms of domain architecture, PLA2c spans Met1–Ala541. The active-site Nucleophile is Ser82. A required for lipid droplet localization region spans residues Leu260–Gln292. Phosphoserine is present on Ser337. Asp385 serves as the catalytic Proton acceptor. The residue at position 538 (Cys538) is a Cysteine methyl ester. Residue Cys538 is the site of S-farnesyl cysteine attachment. A propeptide spans Cys539–Ala541 (removed in mature form).

As to quaternary structure, (Microbial infection) Interacts with HCV non-structural protein 4B/NS4B; this interaction likely initiates the recruitment of replication complexes to lipid droplets. In terms of tissue distribution, highly expressed in heart and skeletal muscle.

Its subcellular location is the cell membrane. The protein resides in the endoplasmic reticulum membrane. It localises to the mitochondrion membrane. The protein localises to the lipid droplet. It carries out the reaction a 1,2-diacyl-sn-glycero-3-phosphocholine + H2O = a 1-acyl-sn-glycero-3-phosphocholine + a fatty acid + H(+). The catalysed reaction is a 1-O-alkyl-2-acyl-sn-glycero-3-phosphocholine + H2O = a 1-O-alkyl-sn-glycero-3-phosphocholine + a fatty acid + H(+). It catalyses the reaction 1,2-dihexadecanoyl-sn-glycero-3-phosphocholine + H2O = 1-hexadecanoyl-sn-glycero-3-phosphocholine + hexadecanoate + H(+). The enzyme catalyses 1-hexadecanoyl-2-(9Z-octadecenoyl)-sn-glycero-3-phosphocholine + H2O = 1-hexadecanoyl-sn-glycero-3-phosphocholine + (9Z)-octadecenoate + H(+). It carries out the reaction 1-hexadecanoyl-2-(9Z,12Z-octadecadienoyl)-sn-glycero-3-phosphocholine + H2O = (9Z,12Z)-octadecadienoate + 1-hexadecanoyl-sn-glycero-3-phosphocholine + H(+). The catalysed reaction is 1-hexadecanoyl-2-(5Z,8Z,11Z,14Z-eicosatetraenoyl)-sn-glycero-3-phosphocholine + H2O = 1-hexadecanoyl-sn-glycero-3-phosphocholine + (5Z,8Z,11Z,14Z)-eicosatetraenoate + H(+). It catalyses the reaction 1-O-hexadecyl-2-(5Z,8Z,11Z,14Z)-eicosatetraenoyl-sn-glycero-3-phosphocholine + H2O = 1-O-hexadecyl-sn-glycero-3-phosphocholine + (5Z,8Z,11Z,14Z)-eicosatetraenoate + H(+). The enzyme catalyses 1-hexadecanoyl-2-(5Z,8Z,11Z,14Z-eicosatetraenoyl)-sn-glycero-3-phosphocholine + H2O = 2-(5Z,8Z,11Z,14Z)-eicosatetraenoyl-sn-glycero-3-phosphocholine + hexadecanoate + H(+). It carries out the reaction a 1-acyl-sn-glycero-3-phosphocholine + H2O = sn-glycerol 3-phosphocholine + a fatty acid + H(+). The catalysed reaction is 1-hexadecanoyl-sn-glycero-3-phosphocholine + H2O = sn-glycerol 3-phosphocholine + hexadecanoate + H(+). It catalyses the reaction 2 1-hexadecanoyl-sn-glycero-3-phosphocholine = 1,2-dihexadecanoyl-sn-glycero-3-phosphocholine + sn-glycerol 3-phosphocholine. The enzyme catalyses 1-hexadecanoyl-sn-glycero-3-phosphoethanolamine + 1-hexadecanoyl-sn-glycero-3-phosphocholine = 1,2-dihexadecanoyl-sn-glycero-3-phosphoethanolamine + sn-glycerol 3-phosphocholine. It carries out the reaction 1-hexadecanoyl-sn-glycero-3-phosphoethanolamine + 1-hexadecanoyl-sn-glycero-3-phosphocholine = sn-glycero-3-phosphoethanolamine + 1,2-dihexadecanoyl-sn-glycero-3-phosphocholine. The catalysed reaction is 2 1-hexadecanoyl-sn-glycero-3-phosphoethanolamine = 1,2-dihexadecanoyl-sn-glycero-3-phosphoethanolamine + sn-glycero-3-phosphoethanolamine. It catalyses the reaction 1-O-hexadecyl-sn-glycero-3-phosphocholine + 1-hexadecanoyl-sn-glycero-3-phosphocholine = 1-O-hexadecyl-2-hexadecanoyl-sn-glycero-3-phosphocholine + sn-glycerol 3-phosphocholine. The enzyme catalyses a 1-O-(1Z-alkenyl)-sn-glycero-3-phosphoethanolamine + 1-hexadecanoyl-sn-glycero-3-phosphocholine = 1-O-(1Z)-alkenyl-2-hexadecanoyl-sn-glycero-3-phosphoethanolamine + sn-glycerol 3-phosphocholine. It carries out the reaction 1-O-hexadecyl-sn-glycero-3-phosphocholine + 1-hexadecanoyl-sn-glycero-3-phosphoethanolamine = 1-O-hexadecyl-2-hexadecanoyl-sn-glycero-3-phosphocholine + sn-glycero-3-phosphoethanolamine. The catalysed reaction is 1-octadecanoyl-2-(5Z,8Z,11Z,14Z)-eicosatetraenoyl-sn-glycero-3-phosphoethanolamine + 1-hexadecanoyl-sn-glycero-3-phosphocholine = 1-octadecanoyl-sn-glycero-3-phosphoethanolamine + 1-hexadecanoyl-2-(5Z,8Z,11Z,14Z-eicosatetraenoyl)-sn-glycero-3-phosphocholine. It catalyses the reaction 1-octadecanoyl-2-(5Z,8Z,11Z,14Z)-eicosatetraenoyl-sn-glycero-3-phosphoethanolamine + 1-O-hexadecyl-sn-glycero-3-phosphocholine = 1-octadecanoyl-sn-glycero-3-phosphoethanolamine + 1-O-hexadecyl-2-(5Z,8Z,11Z,14Z)-eicosatetraenoyl-sn-glycero-3-phosphocholine. The enzyme catalyses 1-hexadecanoyl-2-(9Z,12Z-octadecadienoyl)-sn-glycero-3-phosphocholine + a 1-O-(1Z-alkenyl)-sn-glycero-3-phosphoethanolamine = 1-O-(1Z-alkenyl)-2-(9Z,12Z-octadecadienoyl)-sn-glycero-3-phosphoethanolamine + 1-hexadecanoyl-sn-glycero-3-phosphocholine. It carries out the reaction 1-hexadecanoyl-2-(5Z,8Z,11Z,14Z-eicosatetraenoyl)-sn-glycero-3-phosphocholine + a 1-O-(1Z-alkenyl)-sn-glycero-3-phosphoethanolamine = 1-O-(1Z)-alkenyl-2-(5Z,8Z,11Z,14Z)-eicosatetraenoyl-sn-glycero-3-phosphoethanolamine + 1-hexadecanoyl-sn-glycero-3-phosphocholine. With respect to regulation, not regulated by calcium, coenzyme A or ATP. Lysophospholipase activity is inhibited by palmitoyl-CoA. Lysophospholipase and O-acyltransferase activities are inhibited by methylarachidonoylfluorophosphonate. Lysophospholipase activity is inhibited by phosphatidate or lysophosphatidate. O-acyltransferase activity is up-regulated at low concentration (10-20 uM) of phosphatidate or lysophosphatidate, but inhibited at higher concentrations. Its function is as follows. Calcium-independent phospholipase, lysophospholipase and O-acyltransferase involved in phospholipid remodeling with implications in endoplasmic reticulum membrane homeostasis and lipid droplet biogenesis. Preferentially hydrolyzes the ester bond of the fatty acyl group attached at the sn-2 position of phospholipids with choline and ethanolamine head groups, producing lysophospholipids that are used in deacylation-reacylation cycles. Transfers the sn-1 fatty acyl from one lysophospholipid molecule to the sn-2 position of another lysophospholipid to form diacyl, alkylacyl and alkenylacyl glycerophospholipids. Cleaves ester bonds but not alkyl or alkenyl ether bonds at sn-1 position of lysophospholipids. Catalyzes sn-2 fatty acyl transfer from phospholipids to the sn-2 position of 1-O-alkyl or 1-O-alkenyl lysophospholipids with lower efficiency. In response to dietary fatty acids, may play a role in the formation of nascent lipid droplets from the endoplasmic reticulum likely by regulating the phospholipid composition of these organelles. (Microbial infection) May play a role in replication and assembly of human hepatitis C virus (HCV). In response to HCV infection, promotes remodeling of host endoplasmic reticulum membranes to form organelle-like structures called membranous web, where HCV replication occur. Can further mediate translocation of replication complexes to lipid droplets to enable virion assembly. Functionally, (Microbial infection) May facilitate human T-lymphotropic virus type 1 (HTLV-1) infection by promoting leukotriene B4 (LTB4) biosynthesis. LTB4 acts as a chemoattractant for HTLV-1-infected CD4-positive T cells and favors cell to cell viral transmission. The polypeptide is Cytosolic phospholipase A2 gamma (PLA2G4C) (Homo sapiens (Human)).